The sequence spans 513 residues: ATP synthase subunit alpha (513 aa).

G169–T176 is an ATP binding site.

The protein belongs to the ATPase alpha/beta chains family. As to quaternary structure, F-type ATPases have 2 components, CF(1) - the catalytic core - and CF(0) - the membrane proton channel. CF(1) has five subunits: alpha(3), beta(3), gamma(1), delta(1), epsilon(1). CF(0) has three main subunits: a(1), b(2) and c(9-12). The alpha and beta chains form an alternating ring which encloses part of the gamma chain. CF(1) is attached to CF(0) by a central stalk formed by the gamma and epsilon chains, while a peripheral stalk is formed by the delta and b chains.

It localises to the cell inner membrane. It catalyses the reaction ATP + H2O + 4 H(+)(in) = ADP + phosphate + 5 H(+)(out). Produces ATP from ADP in the presence of a proton gradient across the membrane. The alpha chain is a regulatory subunit. The polypeptide is ATP synthase subunit alpha (Histophilus somni (strain 2336) (Haemophilus somnus)).